The following is a 563-amino-acid chain: Phospholipase B-like protein F (563 aa).

A signal peptide spans 1–21 (MKIINSFVFIFVLLFVFNTNA). Residues N85, N107, N118, N121, N208, N312, and N537 are each glycosylated (N-linked (GlcNAc...) asparagine).

Belongs to the phospholipase B-like family.

The protein resides in the secreted. In terms of biological role, probable phospholipase. The sequence is that of Phospholipase B-like protein F (plbF) from Dictyostelium discoideum (Social amoeba).